Reading from the N-terminus, the 295-residue chain is Protoheme IX farnesyltransferase (295 aa).

9 consecutive transmembrane segments (helical) span residues 8 to 28 (VTKPGIIFGNLISVIGGFLLA), 35 to 55 (YTLFASTLVGVSLVVASGCVF), 84 to 104 (VSLVYATLLGIAGFMLLWFGA), 107 to 127 (LACWLGVMGFVVYVGVYSLYM), 132 to 152 (VYGTLIGSLSGAAPPVIGYCA), 162 to 182 (LILLAIFSLWQMPHSYAIAIF), 208 to 228 (ITLYIIAFAVATLMLSLGGYA), 233 to 253 (LVVAAAVSVWWLGMALRGYKV), and 264 to 284 (FVFSIVAITSLSVMMSVDFMV).

It belongs to the UbiA prenyltransferase family. Protoheme IX farnesyltransferase subfamily.

The protein localises to the cell inner membrane. The enzyme catalyses heme b + (2E,6E)-farnesyl diphosphate + H2O = Fe(II)-heme o + diphosphate. Its pathway is porphyrin-containing compound metabolism; heme O biosynthesis; heme O from protoheme: step 1/1. In terms of biological role, converts heme B (protoheme IX) to heme O by substitution of the vinyl group on carbon 2 of heme B porphyrin ring with a hydroxyethyl farnesyl side group. This is Protoheme IX farnesyltransferase from Enterobacter sp. (strain 638).